Here is a 772-residue protein sequence, read N- to C-terminus: Elongin-A (772 aa).

The TFIIS N-terminal domain occupies 4 to 79 (ESALQVVEKL…AQWKKLVPVE (76 aa)). 2 stretches are compositionally biased toward basic and acidic residues: residues 79-105 (ERNA…LQKE) and 136-156 (LSEL…DERK). Disordered regions lie at residues 79–403 (ERNA…FEQP) and 418–466 (KKKK…EKPA). S196 is modified (phosphoserine). Basic and acidic residues-rich tracts occupy residues 226-235 (QERHLGEPHG), 253-269 (RPVD…VSRE), 275-308 (LSKE…EGSS), 321-343 (SDNH…KSKQ), and 372-384 (PEGK…DRKS). S384 and S387 each carry phosphoserine. At T394 the chain carries Phosphothreonine. An N6-acetyllysine modification is found at K434. Over residues 434–443 (KGLKKNDSKS) the composition is skewed to basic and acidic residues. The residue at position 516 (S516) is a Phosphoserine. The activation domain stretch occupies residues 522–681 (EAGFTGRRMN…PPRDVRRRQE (160 aa)). The segment at 550 to 559 (TLHQQCIRVL) is BC-box. In terms of domain architecture, F-box spans 566–610 (IFEVGGVPYSVLEPVLERCTPDQLYRIEEYNHVLIEETDQLWKVH). The disordered stretch occupies residues 674–732 (RDVRRRQEKFGTGGAAVPEKIKIKPAPYPMGSSHASASSISFNPSPEEPAYDGPSTSSA). Over residues 705–714 (SSHASASSIS) the composition is skewed to low complexity.

Heterotrimer of an A (ELOA, ELOA2 or ELOA3P), ELOB and ELOC subunit. Part of a multisubunit ubiquitin ligase complex consisting of elongin BC complex (ELOB and ELOC), elongin A/ELOA, RBX1 and CUL5. Interacts with ERCC6; the interaction is induced by DNA damaging agents or inhibitors of RNA polymerase II elongation. Interacts (via BC-box) with CUL5.

Its subcellular location is the nucleus. SIII, also known as elongin, is a general transcription elongation factor that increases the RNA polymerase II transcription elongation past template-encoded arresting sites. Subunit A is transcriptionally active and its transcription activity is strongly enhanced by binding to the dimeric complex of the SIII regulatory subunits B and C (elongin BC complex). Functionally, as part of a multisubunit complex composed of elongin BC complex (ELOB and ELOC), elongin A/ELOA, RBX1 and CUL5; polyubiquitinates monoubiquitinated POLR2A. In Homo sapiens (Human), this protein is Elongin-A.